A 157-amino-acid polypeptide reads, in one-letter code: MSSLCLQRLQEERKKWRKDHPFGFYAKPVKKADGSMDLQKWEAGIPGKEGTNWAGGVYPITVEYPNEYPSKPPKVKFPAGFYHPNVYPSGTICLSILNEDQDWRPAITLKQIVLGVQDLLDSPNPNSPAQEPAWRSFSRNKAEYDKKVLLQAKQYSK.

Ser-2 carries the post-translational modification N-acetylserine. In terms of domain architecture, UBC core spans 4–157 (LCLQRLQEER…VLLQAKQYSK (154 aa)). The active-site Glycyl thioester intermediate is Cys-93.

The protein belongs to the ubiquitin-conjugating enzyme family. As to quaternary structure, interacts with SIZ1.

Its subcellular location is the nucleus. The protein operates within protein modification; protein sumoylation. In terms of biological role, E2 ubiquitin-like--protein ligase mediating SUMO/Smt3 attachment to septins and PCNA. Seems to be involved in degradation of S- (CLB5) and M-phase cyclins (CLB2). In Saccharomyces cerevisiae (strain ATCC 204508 / S288c) (Baker's yeast), this protein is SUMO-conjugating enzyme UBC9 (UBC9).